The primary structure comprises 1191 residues: Probable inositol polyphosphate 5-phosphatase C9G1.10c (1191 aa).

Polar residues-rich tracts occupy residues methionine 1–valine 10, glutamine 72–asparagine 101, serine 114–serine 135, serine 151–glycine 161, and asparagine 181–serine 193. The interval methionine 1–serine 193 is disordered. The residue at position 195 (serine 195) is a Phosphoserine. Disordered stretches follow at residues serine 205–valine 281, serine 294–leucine 334, and isoleucine 355–serine 425. Residues threonine 268–proline 280 are compositionally biased toward pro residues. The segment covering serine 302 to leucine 311 has biased composition (basic residues). Polar residues-rich tracts occupy residues threonine 316–leucine 334, histidine 367–leucine 382, and leucine 400–glutamate 413. Low complexity predominate over residues glutamine 414–serine 425.

It belongs to the inositol 1,4,5-trisphosphate 5-phosphatase family.

The protein localises to the cytoplasm. The polypeptide is Probable inositol polyphosphate 5-phosphatase C9G1.10c (Schizosaccharomyces pombe (strain 972 / ATCC 24843) (Fission yeast)).